A 39-amino-acid chain; its full sequence is Basic phospholipase A2 (39 aa).

Positions 27, 29, and 31 each coordinate Ca(2+).

It belongs to the phospholipase A2 family. Group II subfamily. D49 sub-subfamily. It depends on Ca(2+) as a cofactor. In terms of tissue distribution, expressed by the venom gland.

The protein resides in the secreted. The enzyme catalyses a 1,2-diacyl-sn-glycero-3-phosphocholine + H2O = a 1-acyl-sn-glycero-3-phosphocholine + a fatty acid + H(+). Its activity is regulated as follows. Is selectively inhibited by the gamma-phospholipase A2 inhibitor (PLI) CgMIP-I (AC P0DQP7) but not by the alpha-PLI CgMIP-II (AC P0DQP8). Its function is as follows. Snake venom phospholipase A2 (PLA2) that shows high myotoxic activities, induces mild edema, and shows cytolytic, and anti-coagulant activities, as well as intracerebral lethal effect. Does not induce lethality at a dose of 5 ug/g, when intravenously injected into mice. PLA2 catalyzes the calcium-dependent hydrolysis of the 2-acyl groups in 3-sn-phosphoglycerides. The sequence is that of Basic phospholipase A2 from Cerrophidion godmani (Porthidium godmani).